Here is a 258-residue protein sequence, read N- to C-terminus: 5'-nucleotidase SurE (258 aa).

A divalent metal cation is bound by residues aspartate 9, aspartate 10, serine 42, and asparagine 96.

It belongs to the SurE nucleotidase family. It depends on a divalent metal cation as a cofactor.

The protein localises to the cytoplasm. The catalysed reaction is a ribonucleoside 5'-phosphate + H2O = a ribonucleoside + phosphate. Nucleotidase that shows phosphatase activity on nucleoside 5'-monophosphates. This is 5'-nucleotidase SurE from Campylobacter jejuni subsp. doylei (strain ATCC BAA-1458 / RM4099 / 269.97).